We begin with the raw amino-acid sequence, 233 residues long: Superoxide dismutase [Mn] 3.4, mitochondrial (233 aa).

A mitochondrion-targeting transit peptide spans M1–G29. 4 residues coordinate Mn(2+): H57, H105, D194, and H198.

Belongs to the iron/manganese superoxide dismutase family. As to quaternary structure, homotetramer. It depends on Mn(2+) as a cofactor.

It localises to the mitochondrion matrix. It carries out the reaction 2 superoxide + 2 H(+) = H2O2 + O2. Destroys superoxide anion radicals which are normally produced within the cells and which are toxic to biological systems. The protein is Superoxide dismutase [Mn] 3.4, mitochondrial (SODA.3) of Zea mays (Maize).